The chain runs to 279 residues: UTP--glucose-1-phosphate uridylyltransferase (279 aa).

It belongs to the UDPGP type 2 family.

The enzyme catalyses alpha-D-glucose 1-phosphate + UTP + H(+) = UDP-alpha-D-glucose + diphosphate. Its function is as follows. May play a role in stationary phase survival. In Pseudomonas aeruginosa, this protein is UTP--glucose-1-phosphate uridylyltransferase (galU).